The sequence spans 544 residues: Chaperonin GroEL (544 aa).

Residues 30–33 (TLGP), Lys51, 87–91 (DGTTT), Gly415, and Asp495 each bind ATP.

This sequence belongs to the chaperonin (HSP60) family. In terms of assembly, forms a cylinder of 14 subunits composed of two heptameric rings stacked back-to-back. Interacts with the co-chaperonin GroES.

Its subcellular location is the cytoplasm. The catalysed reaction is ATP + H2O + a folded polypeptide = ADP + phosphate + an unfolded polypeptide.. Its function is as follows. Together with its co-chaperonin GroES, plays an essential role in assisting protein folding. The GroEL-GroES system forms a nano-cage that allows encapsulation of the non-native substrate proteins and provides a physical environment optimized to promote and accelerate protein folding. The polypeptide is Chaperonin GroEL (Aeromonas salmonicida).